The sequence spans 398 residues: Ornithine aminotransferase (398 aa).

Position 256 is an N6-(pyridoxal phosphate)lysine (Lys256).

Belongs to the class-III pyridoxal-phosphate-dependent aminotransferase family. OAT subfamily. The cofactor is pyridoxal 5'-phosphate.

Its subcellular location is the cytoplasm. The enzyme catalyses a 2-oxocarboxylate + L-ornithine = L-glutamate 5-semialdehyde + an L-alpha-amino acid. Its pathway is amino-acid biosynthesis; L-proline biosynthesis; L-glutamate 5-semialdehyde from L-ornithine: step 1/1. Catalyzes the interconversion of ornithine to glutamate semialdehyde. This is Ornithine aminotransferase from Halalkalibacterium halodurans (strain ATCC BAA-125 / DSM 18197 / FERM 7344 / JCM 9153 / C-125) (Bacillus halodurans).